The sequence spans 513 residues: Beta-amyrin 24-hydroxylase (513 aa).

The chain crosses the membrane as a helical; Signal-anchor span at residues 1–21 (MLDIKGYLVLFFLWFISTILI). Cysteine 451 is a binding site for heme.

The protein belongs to the cytochrome P450 family. Heme is required as a cofactor.

It is found in the membrane. The enzyme catalyses beta-amyrin + reduced [NADPH--hemoprotein reductase] + O2 = 24-hydroxy-beta-amyrin + oxidized [NADPH--hemoprotein reductase] + H2O + H(+). The catalysed reaction is sophoradiol + reduced [NADPH--hemoprotein reductase] + O2 = soyasapogenol B + oxidized [NADPH--hemoprotein reductase] + H2O + H(+). Its function is as follows. Heme-containing cytochrome P450 involved in the biosynthesis of soyasaponins. Hydroxylates specifically the C-24 methyl group of the triterpenes beta-amyrin and sophoradiol. No activity with lupeol, butyrospermol, tirucalla-7,21-dien-3beta-ol, taraxasterol, psi-taraxasterol, bauerenol, alpha-amyrin and multiflorenol as substrates. The sequence is that of Beta-amyrin 24-hydroxylase (CYP93E1) from Glycine max (Soybean).